Consider the following 28-residue polypeptide: Ranatuerin-2B (28 aa).

Cysteines 23 and 28 form a disulfide.

In terms of tissue distribution, expressed by the skin glands.

The protein resides in the secreted. Its function is as follows. Antibacterial activity against Gram-positive bacterium S.aureus and Gram-negative bacterium E.coli. Has activity against C.albicans. This is Ranatuerin-2B from Lithobates berlandieri (Rio Grande leopard frog).